A 1347-amino-acid chain; its full sequence is MTRAEVEPGAQAKAENKPGDENANAAEVEPEAPLVVRPKVRTQIMTGARPKVKPKGTPGARPKGETSTPGGAYAKCKPKAIPIARSKHDAQVWAPNKFRGESMSKMGKQCQISAADPPLLSNDSGMVAQAKCLPVDRELANMDTESIPKKANSPAGFQPSYGSEEGTNMGSWYRARPVPKGEAYENSDFKWADKPSGSPSFWNRDEASTRFRPRKSMKANNRFRHMAKQEANTMPRHKNKQEFYNISSSDSEDESGKTPWFWPKDKTKVWSKPKEEPNSRSWFRSKKEVRVESTSGSECENPTKSLFWSGEEAKSRSKPRARKGVNMRARQQAKREACSDAMSGAIDTNKKESWFLPEEKANVFSKSKTKKEPRTRAVPKEEVKTKARASTKQEARPEEEVLVGAWFWDTQESTMADRISIKTTFVEEEPIVGDWFWSEEEASVDSETCHTSRPRAKEEQVSSFCLGSGKKSSMESGPKATSKSMPVAKEDEVVIGSWFWADDEEINLQADDESIFGSWFWGTGENSLRSVGVNCEKMPKAGEKEVTDSWFWAGDVNTEAEVEEQARSASTKATIFVPWFWSEKQPNMDLGSEPCSDIMAGAEEEPIIGPWFWAKVDNSVEAEVNSKSSLEDEEEPIRSPWFGAREQTDMKYAAGIRYKPMAEAEDANKKSCVWAKEPCLYPTNRECLKSTLGEKEDTVDPWLWSNNYPRTKTITGSWLWAAEEGNIDDETGEKIKLPTLEDNAFNSWFWKENEESIVEAPKREEFRPEAEEEDIIGSWFWAGDEDRFEPAAKINEENKIASEDEDTVGSWFWGNEEASLEAVRRGTFESAPGIKEEKVTGSWFWTDKAKVGAGSQTVETGSETEEEAIFESLIWAAKKDSIQAGVKRVSKPKDDGNIAVGSWLWSSDKATKEAKTLIVSEASPENGKESVVKFGSRAKDEVINKTGSGDNCKHSTEAETIVGAWFWEGDEASFESNPVPVCKAVCEPESSAEHEPDPSRRPQSWDEVTVQFKAGPWGKAGFPPMNPFRFPKEAASLFAEMFGGKPKLVEVGPEREPEPQFPFQYDPSYRSVREIREHLKARESAQPENWSCNCIQCELRIGSEEFEELLLLMDRNRDPFIHEISKIAMGMRGASQFTRDFIRNSGVVSLIEALLNYPSSRVRTRFLENMVRMAPPYPDLNMIETYVCQICEDTFDYDLDSPDQLSGLTMITHLTATSDYHKVVVNYLAGFFYLLNSGNTKTRFHVLKLLLNLSENLVMTKRLLVTDSVSEFMDLINREESDENIQIVLAIFETISKHIQKEALFSDDDDDDEEEDAVNLEPFISAFREAEKIAKELKRKPGNQKAP.

Disordered stretches follow at residues 1 to 75, 145 to 174, and 188 to 281; these read MTRA…AYAK, ESIP…SWYR, and DFKW…NSRS. The span at 21 to 33 shows a compositional bias: low complexity; that stretch reads ENANAAEVEPEAP. Positions 211-226 are enriched in basic residues; that stretch reads FRPRKSMKANNRFRHM. Positions 263-278 are enriched in basic and acidic residues; that stretch reads PKDKTKVWSKPKEEPN. Ser295 carries the post-translational modification Phosphoserine. Disordered regions lie at residues 310–344, 364–396, and 460–485; these read GEEA…AMSG, FSKS…QEAR, and QVSS…SKSM. Residues 316–325 show a composition bias toward basic residues; it reads RSKPRARKGV. A compositionally biased stretch (basic and acidic residues) spans 370–396; the sequence is KKEPRTRAVPKEEVKTKARASTKQEAR. The segment covering 461–484 has biased composition (polar residues); it reads VSSFCLGSGKKSSMESGPKATSKS. Residues Ser619 and Ser626 each carry the phosphoserine modification. Thr860 bears the Phosphothreonine mark. Residue Ser862 is modified to Phosphoserine.

The protein belongs to the GPRASP family. As to quaternary structure, interacts with cytoplasmic tails of a variety of G-protein coupled receptors such as delta opioid receptor/OPRD1, beta-2 adrenergic receptor/ADRB2 and D4 dopamine receptor/DRD4 as well as D2 dopamine receptor/DRD2. Interacts with PER1. Interacts with BECN2; the interaction is direct. As to expression, expressed in the brain, with higher expression in the hippocampus, hypothalamus and olfactory bulb.

The protein resides in the cytoplasm. Functionally, modulates lysosomal sorting and functional down-regulation of a variety of G-protein coupled receptors. Targets receptors for degradation in lysosomes via its interaction with BECN2. This chain is G-protein coupled receptor-associated sorting protein 1 (Gprasp1), found in Mus musculus (Mouse).